Here is a 202-residue protein sequence, read N- to C-terminus: FMN-dependent NADH:quinone oxidoreductase 2 (202 aa).

FMN contacts are provided by residues Ser-9, 15-17, 95-98, and 139-142; these read SAS, MYNF, and TAGG.

The protein belongs to the azoreductase type 1 family. Homodimer. The cofactor is FMN.

The enzyme catalyses 2 a quinone + NADH + H(+) = 2 a 1,4-benzosemiquinone + NAD(+). It carries out the reaction N,N-dimethyl-1,4-phenylenediamine + anthranilate + 2 NAD(+) = 2-(4-dimethylaminophenyl)diazenylbenzoate + 2 NADH + 2 H(+). Quinone reductase that provides resistance to thiol-specific stress caused by electrophilic quinones. Reduces both benzoquinones and naphthoquinones efficiently. Its function is as follows. Also exhibits azoreductase activity. Catalyzes the reductive cleavage of the azo bond in aromatic azo compounds to the corresponding amines. Preferred substrates are the large bis-azo dye Ponceau BS, amaranth and tropaeolin O. This Pseudomonas aeruginosa (strain ATCC 15692 / DSM 22644 / CIP 104116 / JCM 14847 / LMG 12228 / 1C / PRS 101 / PAO1) protein is FMN-dependent NADH:quinone oxidoreductase 2.